The primary structure comprises 161 residues: MAYNPITPSKLIAFSASYVPVRTLLNFLVASQGTAFQTQAGRDSFRESLSALPSSVVDINSRFPDAGFYAFLNGPVLRPIFVSLLSSTDTRNRVIEVVDPSNPTTAESLNAVKRTDDASTAARAEIDNLIESISKGFDVYDRASFEAAFSVVWSEATTSKA.

Ala-2 bears the N-acetylalanine; by host mark.

Belongs to the virgaviridae capsid protein family.

It is found in the virion. In terms of biological role, capsid protein self-assembles to form rod-shaped virions about 18 nm in diameter with a central canal enclosing the viral genomic RNA. The sequence is that of Capsid protein (CP) from Cucumber green mottle mosaic virus (strain watermelon SH) (CGMMV).